A 169-amino-acid polypeptide reads, in one-letter code: Peptide deformylase (169 aa).

The Fe cation site is built by Cys91 and His133. Glu134 is an active-site residue. His137 contributes to the Fe cation binding site.

The protein belongs to the polypeptide deformylase family. Fe(2+) is required as a cofactor.

The enzyme catalyses N-terminal N-formyl-L-methionyl-[peptide] + H2O = N-terminal L-methionyl-[peptide] + formate. Functionally, removes the formyl group from the N-terminal Met of newly synthesized proteins. Requires at least a dipeptide for an efficient rate of reaction. N-terminal L-methionine is a prerequisite for activity but the enzyme has broad specificity at other positions. In Escherichia coli (strain SMS-3-5 / SECEC), this protein is Peptide deformylase.